A 734-amino-acid polypeptide reads, in one-letter code: Photosystem I P700 chlorophyll a apoprotein A2 (734 aa).

Helical transmembrane passes span 46–69 (IFAS…FHVA), 135–158 (LYTG…LHLQ), 175–199 (LNHH…HVAI), 273–291 (IAHH…GHMY), 330–353 (LHFQ…QHMY), 369–395 (AALY…ILVI), 417–439 (AIIS…LYVH), and 517–535 (FLVH…LILV). [4Fe-4S] cluster contacts are provided by Cys-559 and Cys-568. 2 helical membrane passes run 575–596 (AFYL…YWHW) and 643–665 (LSVW…MFLI). Residues His-654, Met-662, and Tyr-670 each contribute to the chlorophyll a site. Trp-671 lines the phylloquinone pocket. Residues 707-727 (LVGLAHFSVGYIFTYAAFLIA) form a helical membrane-spanning segment.

The protein belongs to the PsaA/PsaB family. As to quaternary structure, the PsaA/B heterodimer binds the P700 chlorophyll special pair and subsequent electron acceptors. PSI consists of a core antenna complex that captures photons, and an electron transfer chain that converts photonic excitation into a charge separation. The eukaryotic PSI reaction center is composed of at least 11 subunits. It depends on P700 is a chlorophyll a/chlorophyll a' dimer, A0 is one or more chlorophyll a, A1 is one or both phylloquinones and FX is a shared 4Fe-4S iron-sulfur center. as a cofactor.

Its subcellular location is the plastid. It is found in the chloroplast thylakoid membrane. The catalysed reaction is reduced [plastocyanin] + hnu + oxidized [2Fe-2S]-[ferredoxin] = oxidized [plastocyanin] + reduced [2Fe-2S]-[ferredoxin]. Its function is as follows. PsaA and PsaB bind P700, the primary electron donor of photosystem I (PSI), as well as the electron acceptors A0, A1 and FX. PSI is a plastocyanin-ferredoxin oxidoreductase, converting photonic excitation into a charge separation, which transfers an electron from the donor P700 chlorophyll pair to the spectroscopically characterized acceptors A0, A1, FX, FA and FB in turn. Oxidized P700 is reduced on the lumenal side of the thylakoid membrane by plastocyanin. This Atropa belladonna (Belladonna) protein is Photosystem I P700 chlorophyll a apoprotein A2.